Here is a 460-residue protein sequence, read N- to C-terminus: Bifunctional beta-D-glucosidase/beta-D-fucosidase (460 aa).

The active-site Proton donor is Glu168. Residue Glu362 is the Nucleophile of the active site.

It belongs to the glycosyl hydrolase 1 family. Monomer.

It is found in the secreted. It catalyses the reaction Hydrolysis of terminal, non-reducing beta-D-glucosyl residues with release of beta-D-glucose.. The enzyme catalyses Hydrolysis of terminal non-reducing beta-D-fucose residues in beta-D-fucosides.. Inhibited by Cu(2+), Ag(+) and Hg(+), but not by other cations such as Mg(2+), Ca(2+), Mn(2+) and Co(2+). Inhibited by 1-amino-1-deoxy-D-glucose and p-chloromercuribenzoic acid, but not by EDTA or dithiothreitol. Inhibited by the disaccharides sucrose, lactose and cellobiose. The monosaccharides D-fructose, D-mannose, D-xylose and D-glucose increase the beta-D-fucosidase activity, but not the beta-D-glucosidase activity. D-glucose inhibits the beta-D-glucosidase activity, but promotes the beta-D-fucosidase activity. D-fucose inhibits the beta-D-glucosidase activity and does not significantly affect the beta-D-fucosidase activity. Bifunctional beta-D-glucosidase/beta-D-fucosidase. Activity towards pNP-beta-D-fucoside is about 80-85% of the activity towards pNP-beta-D-glucoside. Also has slight activity (less than 10%) towards pNP-beta-D-galactoside, and very low activity (less than 1%) towards pNP-beta-D-xyloside. Hydrolyzes laminaribiose, sophorose, cellobiose and gentobiose. Not active against maltose, pNP-alpha-D-glucoside or pNP-beta-L-fucoside. This is Bifunctional beta-D-glucosidase/beta-D-fucosidase from Bifidobacterium breve.